Consider the following 199-residue polypeptide: Peroxiredoxin-2 (199 aa).

The Thioredoxin domain occupies 7–165 (AHVGKPAPEF…ALRLVQAFQY (159 aa)). C52 acts as the Cysteine sulfenic acid (-SOH) intermediate in catalysis. S113 bears the Phosphoserine mark. T183 carries the post-translational modification Phosphothreonine. At K197 the chain carries N6-acetyllysine.

Belongs to the peroxiredoxin family. AhpC/Prx1 subfamily. As to quaternary structure, homodimer; disulfide-linked, upon oxidation. 5 homodimers assemble to form a ring-like decamer. Interacts with TIPIN. In terms of processing, the enzyme can be inactivated by further oxidation of the cysteine sulfenic acid (C(P)-SOH) to sulphinic acid (C(P)-SO2H) instead of its condensation to a disulfide bond. It can be reactivated by forming a transient disulfide bond with sulfiredoxin SRXN1, which reduces the cysteine sulfinic acid in an ATP- and Mg-dependent manner. Acetylation increases resistance to transition to high molecular-mass complexes. Deacetylated by HDAC6 which decreases reducing activity.

The protein resides in the cytoplasm. It catalyses the reaction a hydroperoxide + [thioredoxin]-dithiol = an alcohol + [thioredoxin]-disulfide + H2O. In terms of biological role, thiol-specific peroxidase that catalyzes the reduction of hydrogen peroxide and organic hydroperoxides to water and alcohols, respectively. Plays a role in cell protection against oxidative stress by detoxifying peroxides and as sensor of hydrogen peroxide-mediated signaling events. Might participate in the signaling cascades of growth factors and tumor necrosis factor-alpha by regulating the intracellular concentrations of H(2)O(2). This Bos taurus (Bovine) protein is Peroxiredoxin-2 (PRDX2).